The following is a 459-amino-acid chain: Methylenetetrahydrofolate--tRNA-(uracil-5-)-methyltransferase TrmFO (459 aa).

Residue 15 to 20 (GAGLAG) coordinates FAD.

Belongs to the MnmG family. TrmFO subfamily. The cofactor is FAD.

The protein resides in the cytoplasm. It catalyses the reaction uridine(54) in tRNA + (6R)-5,10-methylene-5,6,7,8-tetrahydrofolate + NADH + H(+) = 5-methyluridine(54) in tRNA + (6S)-5,6,7,8-tetrahydrofolate + NAD(+). It carries out the reaction uridine(54) in tRNA + (6R)-5,10-methylene-5,6,7,8-tetrahydrofolate + NADPH + H(+) = 5-methyluridine(54) in tRNA + (6S)-5,6,7,8-tetrahydrofolate + NADP(+). Its function is as follows. Catalyzes the folate-dependent formation of 5-methyl-uridine at position 54 (M-5-U54) in all tRNAs. The polypeptide is Methylenetetrahydrofolate--tRNA-(uracil-5-)-methyltransferase TrmFO (Syntrophotalea carbinolica (strain DSM 2380 / NBRC 103641 / GraBd1) (Pelobacter carbinolicus)).